A 441-amino-acid polypeptide reads, in one-letter code: Bacteria-responsive protein 1 (441 aa).

An N-terminal signal peptide occupies residues 1-18 (MWFFKVGALLFLAALVSA). Residue asparagine 20 is glycosylated (N-linked (GlcNAc...) asparagine). Positions 25 to 441 (PKVLCYYDGQ…PILRAAKYRL (417 aa)) constitute a GH18 domain. The cysteines at positions 29 and 56 are disulfide-linked. Asparagine 225 carries an N-linked (GlcNAc...) asparagine glycan.

This sequence belongs to the glycosyl hydrolase 18 family. IDGF subfamily. In terms of tissue distribution, salivary gland (at protein level).

It localises to the secreted. Promotes recruitment of host neutrophils at the bite site. Induces expression of IL1B and IL6 in the skin of the host. In terms of biological role, (Microbial infection) Enhances Zika virus replication and exacerbates disease pathogenesis in the host. This is Bacteria-responsive protein 1 from Aedes aegypti (Yellowfever mosquito).